The following is a 186-amino-acid chain: Ribosome-recycling factor (186 aa).

Positions 135–164 (DGMDDLKKAEKDGEIGQDESRAQSERVQKM) are disordered.

The protein belongs to the RRF family.

Its subcellular location is the cytoplasm. Its function is as follows. Responsible for the release of ribosomes from messenger RNA at the termination of protein biosynthesis. May increase the efficiency of translation by recycling ribosomes from one round of translation to another. The protein is Ribosome-recycling factor of Sinorhizobium medicae (strain WSM419) (Ensifer medicae).